The sequence spans 349 residues: Probable G-protein coupled receptor 21 (349 aa).

The Extracellular portion of the chain corresponds to 1-32; that stretch reads MNSTLDGNQSSHPFCLLAFGYLETVNFCLLEV. Asparagine 2 and asparagine 8 each carry an N-linked (GlcNAc...) asparagine glycan. A helical transmembrane segment spans residues 33–53; the sequence is LIIVFLTVLIISGNIIVIFVF. Over 54–75 the chain is Cytoplasmic; sequence HCAPLLNHHTTSYFIQTMAYAD. The chain crosses the membrane as a helical span at residues 76–96; it reads LFVGVSCVVPSLSLLHHPLPV. The Extracellular portion of the chain corresponds to 97 to 104; the sequence is EESLTCQI. A helical membrane pass occupies residues 105-125; it reads FGFVVSVLKSVSMASLACISI. Over 126–147 the chain is Cytoplasmic; it reads DRYIAITKPLTYNTLVTPWRLR. A helical membrane pass occupies residues 148 to 168; the sequence is LCIFLIWLYSTLVFLPSFFHW. The Extracellular segment spans residues 169-191; sequence GKPGYHGDVFQWCAESWHTDSYF. A helical membrane pass occupies residues 192-212; sequence TLFIVMMLYAPAALIVCFTYF. At 213 to 252 the chain is on the cytoplasmic side; it reads NIFRICQQHTKDISERQARFSSQSGETGEVQACPDKRYAM. A helical transmembrane segment spans residues 253-273; that stretch reads VLFRITSVFYILWLPYIIYFL. Over 274–283 the chain is Extracellular; that stretch reads LESSTGHSNR. Residues 284-304 traverse the membrane as a helical segment; that stretch reads FASFLTTWLAISNSFCNCVIY. Residues 305-349 are Cytoplasmic-facing; that stretch reads SLSNSVFQRGLKRLSGAMCTSCASQTTANDPYTVRSKGPLNGCHI.

The protein belongs to the G-protein coupled receptor 1 family. In terms of tissue distribution, not detected in the brain regions thalamus, putamen, caudate, frontal cortex, pons, hypothalamus, hippocampus.

The protein localises to the cell membrane. In terms of biological role, orphan receptor. This is Probable G-protein coupled receptor 21 (GPR21) from Homo sapiens (Human).